A 1288-amino-acid polypeptide reads, in one-letter code: VWFA and cache domain-containing protein 1 (1288 aa).

Positions 1-49 (MAREPEEEETVRPAAVVRRCPRCPGWPGAPRPPLWLLCLVACWILGAVA) are cleaved as a signal peptide. At 50-1109 (DADFSILDEA…ITLNMIKSAP (1060 aa)) the chain is on the extracellular side. N-linked (GlcNAc...) asparagine glycosylation occurs at asparagine 159. Positions 242–457 (HIVVILDHGA…TTVGRFYTNL (216 aa)) constitute a VWFA domain. Cache domains follow at residues 467-546 (FSLP…SEPP) and 786-867 (LTGP…HPTL). A helical membrane pass occupies residues 1110–1130 (VGPVAGGIMGCIMVLVLAVYA). At 1131 to 1288 (YRHQIHRRSH…VTVHTVDAEC (158 aa)) the chain is on the cytoplasmic side. Disordered stretches follow at residues 1157-1176 (NLEN…RGII) and 1187-1237 (ERHV…VDVG). The span at 1159 to 1174 (ENDRDERDDDSHEDRG) shows a compositional bias: basic and acidic residues. Over residues 1210-1229 (GYSTMSPQEDSENPPCNNDP) the composition is skewed to polar residues.

The protein belongs to the calcium channel subunit alpha-2/delta family.

The protein localises to the membrane. Functionally, may regulate voltage-dependent calcium channels. In Mus musculus (Mouse), this protein is VWFA and cache domain-containing protein 1 (Cachd1).